A 112-amino-acid chain; its full sequence is MAMKYVAAYLMCVLGGNENPSTKEVKNVLGAVNADVEDEVLNNFIDSLKGKSCHELITDGLKKLQNIGGGVAAAPAGAAAVETAEAKKEDKKEEKKEEEEEEEDDLGFSLFG.

The tract at residues 81–112 (VETAEAKKEDKKEEKKEEEEEEEDDLGFSLFG) is disordered. A compositionally biased stretch (basic and acidic residues) spans 84–95 (AEAKKEDKKEEK). Residues 96–106 (KEEEEEEEDDL) show a composition bias toward acidic residues.

This sequence belongs to the eukaryotic ribosomal protein P1/P2 family. P1 and P2 exist as dimers at the large ribosomal subunit. Phosphorylated.

Functionally, plays an important role in the elongation step of protein synthesis. In Plasmodium falciparum (isolate 3D7), this protein is Large ribosomal subunit protein P2 (MAL3P3.19).